A 910-amino-acid polypeptide reads, in one-letter code: UPF0182 protein Acid_6445 (910 aa).

Transmembrane regions (helical) follow at residues I17–A37, L56–I76, L101–V121, L157–A177, F210–G229, I252–A272, and W276–V296.

It belongs to the UPF0182 family.

The protein resides in the cell membrane. In Solibacter usitatus (strain Ellin6076), this protein is UPF0182 protein Acid_6445.